The following is an 811-amino-acid chain: Leucine--tRNA ligase (811 aa).

A 'HIGH' region motif is present at residues 40 to 50 (PYPSGRLHMGH). The short motif at 579-583 (KMSKS) is the 'KMSKS' region element. K582 serves as a coordination point for ATP.

It belongs to the class-I aminoacyl-tRNA synthetase family.

It localises to the cytoplasm. The catalysed reaction is tRNA(Leu) + L-leucine + ATP = L-leucyl-tRNA(Leu) + AMP + diphosphate. In Campylobacter fetus subsp. fetus (strain 82-40), this protein is Leucine--tRNA ligase.